Consider the following 369-residue polypeptide: Flagellar P-ring protein (369 aa).

A signal peptide spans 1–23 (MIKQFAVSLLLVLLTLVTTTASA).

The protein belongs to the FlgI family. In terms of assembly, the basal body constitutes a major portion of the flagellar organelle and consists of four rings (L,P,S, and M) mounted on a central rod.

It is found in the periplasm. The protein localises to the bacterial flagellum basal body. Assembles around the rod to form the L-ring and probably protects the motor/basal body from shearing forces during rotation. The sequence is that of Flagellar P-ring protein from Photorhabdus laumondii subsp. laumondii (strain DSM 15139 / CIP 105565 / TT01) (Photorhabdus luminescens subsp. laumondii).